The sequence spans 376 residues: Gibberellin 20 oxidase 4 (376 aa).

Residues 222 to 322 (DNESIFRLNY…RKTLAFFLCP (101 aa)) enclose the Fe2OG dioxygenase domain. Histidine 247, aspartate 249, and histidine 303 together coordinate Fe cation. Arginine 313 is an active-site residue.

It belongs to the iron/ascorbate-dependent oxidoreductase family. GA20OX subfamily. The cofactor is Fe(2+). L-ascorbate is required as a cofactor. As to expression, expressed in roots. Detected in leaves, inflorescences and siliques, but not in stems and dry seeds.

The enzyme catalyses gibberellin A12 + 2 2-oxoglutarate + 3 O2 + H(+) = gibberellin A9 + 2 succinate + 3 CO2 + 2 H2O. It catalyses the reaction gibberellin A53 + 2 2-oxoglutarate + 3 O2 + H(+) = gibberellin A20 + 2 succinate + 3 CO2 + 2 H2O. It participates in plant hormone biosynthesis; gibberellin biosynthesis. Key oxidase enzyme in the biosynthesis of gibberellin that catalyzes the conversion of GA12 and GA53 to GA9 and GA20 respectively, via a three-step oxidation at C-20 of the GA skeleton. The chain is Gibberellin 20 oxidase 4 (GA20OX4) from Arabidopsis thaliana (Mouse-ear cress).